The chain runs to 150 residues: Urease accessory protein UreE (150 aa).

The protein belongs to the UreE family.

It is found in the cytoplasm. Functionally, involved in urease metallocenter assembly. Binds nickel. Probably functions as a nickel donor during metallocenter assembly. The chain is Urease accessory protein UreE from Staphylococcus saprophyticus subsp. saprophyticus (strain ATCC 15305 / DSM 20229 / NCIMB 8711 / NCTC 7292 / S-41).